A 1218-amino-acid chain; its full sequence is Coatomer subunit alpha-2 (1218 aa).

8 WD repeats span residues 7–48 (TKSN…DRFD), 49–88 (EHEGPVRGVHFHNSQPLFVSGGDDYKIKVWNYKTHRCLFT), 91–132 (GHLD…SVLT), 133–172 (GHNHYVMCASFHPKEDLVVSASLDQTVRVWDIGALKKKSA), 202–241 (GHDRGVNWASFHPTLPLIVSGADDRQVKLWRMNETKAWEV), 246–285 (GHMNNVSSVMFHAKQDIIVSNSEDKSIRVWDATKRTGIQT), 288–326 (REHDRFWILAVHPEINLLAAGHDNGMIVFKLERERPAFA), and 363–404 (SLNQ…VGRS). The tract at residues 826 to 849 (NRGAVDEEEEDVEGDWGEGLDKFD) is disordered. The segment covering 831-843 (DEEEEDVEGDWGE) has biased composition (acidic residues).

Oligomeric complex that consists of at least the alpha, beta, beta', gamma, delta, epsilon and zeta subunits.

The protein resides in the cytoplasm. The protein localises to the golgi apparatus membrane. Its subcellular location is the cytoplasmic vesicle. It localises to the COPI-coated vesicle membrane. Functionally, the coatomer is a cytosolic protein complex that binds to dilysine motifs and reversibly associates with Golgi non-clathrin-coated vesicles, which further mediate biosynthetic protein transport from the ER, via the Golgi up to the trans Golgi network. Coatomer complex is required for budding from Golgi membranes, and is essential for the retrograde Golgi-to-ER transport of dilysine-tagged proteins. This is Coatomer subunit alpha-2 from Arabidopsis thaliana (Mouse-ear cress).